The sequence spans 29 residues: U1-pseudomyrmecitoxin-Pt1 subunit SS1 (29 aa).

This sequence belongs to the myrmexin family. As to quaternary structure, heterodimer composed of subunit SS1 and subunit LS1 (U1-PSDTX-Pt1b), and heterodimer composed of subunit SS1 and LS2 (U1-PSDTX-Pt1a); disulfide-linked. Expressed by the venom gland.

The protein resides in the secreted. Functionally, this heterodimer may have anti-inflammatory properties, since the myrmexin complex (composed of 6 SS-LS heterodimers) inhibits carrageenin-induced edema in a dose-dependent manner (after subcutaneous injection into rats). The polypeptide is U1-pseudomyrmecitoxin-Pt1 subunit SS1 (Pseudomyrmex triplarinus (Ant)).